Reading from the N-terminus, the 84-residue chain is Putative membrane protein insertion efficiency factor (84 aa).

Residues 61 to 84 are disordered; it reads SQGFEDPLPPNTKRTNLTHGRQTK. Polar residues predominate over residues 72 to 84; that stretch reads TKRTNLTHGRQTK.

This sequence belongs to the UPF0161 family.

The protein resides in the cell inner membrane. Could be involved in insertion of integral membrane proteins into the membrane. The protein is Putative membrane protein insertion efficiency factor of Leptospira borgpetersenii serovar Hardjo-bovis (strain JB197).